Consider the following 338-residue polypeptide: uncharacterized protein (338 aa).

The segment at 1-20 is disordered; sequence MYNNNQNHHNNDNNMNKDEP. The span at 9 to 20 shows a compositional bias: basic and acidic residues; the sequence is HNNDNNMNKDEP. N-linked (GlcNAc...) asparagine glycans are attached at residues asparagine 37, asparagine 83, asparagine 97, asparagine 105, asparagine 114, and asparagine 122. The tract at residues 55–92 is disordered; it reads VNSGNNNNNNNNNNNNNNNNNNNNNNNNNDSIVINMDT. Over residues 59–92 the composition is skewed to low complexity; sequence NNNNNNNNNNNNNNNNNNNNNNNNNDSIVINMDT. 3 helical membrane-spanning segments follow: residues 148–168, 178–198, and 202–222; these read YKKF…IVLI, FHAY…FLLI, and ILSI…FLKV. Residues asparagine 229, asparagine 240, asparagine 286, asparagine 302, asparagine 317, and asparagine 322 are each glycosylated (N-linked (GlcNAc...) asparagine). Disordered regions lie at residues 279-303 and 316-338; these read SNLN…NSNS and LNSS…TNEE. A compositionally biased stretch (low complexity) spans 280-294; it reads NLNRNNNNSNNVNNN. The segment covering 316-327 has biased composition (low complexity); sequence LNSSGSNSSIYS. The segment covering 328 to 338 has biased composition (polar residues); the sequence is DVQNDIGTNEE.

The protein resides in the membrane. This is an uncharacterized protein from Dictyostelium discoideum (Social amoeba).